The following is a 55-amino-acid chain: Mannose/glucose-specific lectin alpha chain (55 aa).

This sequence belongs to the leguminous lectin family. In terms of assembly, tetramer of two alpha and two beta chains.

This is Mannose/glucose-specific lectin alpha chain from Lathyrus sativus (White vetchling).